The sequence spans 388 residues: Mannitol-1-phosphate 5-dehydrogenase (388 aa).

4 to 15 (AVHFGAGNIGRG) is a binding site for NAD(+).

The protein belongs to the mannitol dehydrogenase family.

The catalysed reaction is D-mannitol 1-phosphate + NAD(+) = beta-D-fructose 6-phosphate + NADH + H(+). This is Mannitol-1-phosphate 5-dehydrogenase from Thermoanaerobacter pseudethanolicus (strain ATCC 33223 / 39E) (Clostridium thermohydrosulfuricum).